Reading from the N-terminus, the 420-residue chain is UDP-N-acetylglucosamine 1-carboxyvinyltransferase (420 aa).

A phosphoenolpyruvate-binding site is contributed by 23-24 (KN). Arginine 92 provides a ligand contact to UDP-N-acetyl-alpha-D-glucosamine. The active-site Proton donor is the cysteine 116. 2-(S-cysteinyl)pyruvic acid O-phosphothioketal is present on cysteine 116. Residues 121-125 (RPVDL), 161-164 (KVSV), aspartate 306, and isoleucine 328 contribute to the UDP-N-acetyl-alpha-D-glucosamine site.

This sequence belongs to the EPSP synthase family. MurA subfamily.

Its subcellular location is the cytoplasm. It carries out the reaction phosphoenolpyruvate + UDP-N-acetyl-alpha-D-glucosamine = UDP-N-acetyl-3-O-(1-carboxyvinyl)-alpha-D-glucosamine + phosphate. It functions in the pathway cell wall biogenesis; peptidoglycan biosynthesis. In terms of biological role, cell wall formation. Adds enolpyruvyl to UDP-N-acetylglucosamine. The sequence is that of UDP-N-acetylglucosamine 1-carboxyvinyltransferase from Photobacterium profundum (strain SS9).